A 277-amino-acid chain; its full sequence is NH(3)-dependent NAD(+) synthetase (277 aa).

Gly-36–Ser-43 contacts ATP. Asp-42 contacts Mg(2+). Arg-118 provides a ligand contact to deamido-NAD(+). Position 138 (Thr-138) interacts with ATP. Glu-143 is a Mg(2+) binding site. ATP-binding residues include Lys-167 and Ser-189.

It belongs to the NAD synthetase family. Homodimer.

It catalyses the reaction deamido-NAD(+) + NH4(+) + ATP = AMP + diphosphate + NAD(+) + H(+). It functions in the pathway cofactor biosynthesis; NAD(+) biosynthesis; NAD(+) from deamido-NAD(+) (ammonia route): step 1/1. Functionally, catalyzes the ATP-dependent amidation of deamido-NAD to form NAD. Uses ammonia as a nitrogen source. This is NH(3)-dependent NAD(+) synthetase from Chlorobaculum parvum (strain DSM 263 / NCIMB 8327) (Chlorobium vibrioforme subsp. thiosulfatophilum).